The sequence spans 790 residues: Cadherin-6 (790 aa).

The signal sequence occupies residues 1–18; it reads MRTYRYFLLLFWVGQPYP. Residues 19 to 53 constitute a propeptide that is removed on maturation; the sequence is TFSTPLSKRTSGFPAKKRTLELSGNSKNELSRSKR. Cadherin domains lie at 54 to 159, 160 to 268, 269 to 383, 384 to 486, and 487 to 608; these read SWMW…EPIF, TKEV…PPRF, PQST…PPVF, SKLA…DNPP, and EFAE…LVHP. The Extracellular segment spans residues 54–615; sequence SWMWNQFFLL…VHPTGLSTGA (562 aa). The N-linked (GlcNAc...) asparagine glycan is linked to Asn-255. The interval 261 to 291 is disordered; it reads VNDNPPRFPQSTYQFKTPESSPPGTPIGRIK. Polar residues predominate over residues 269–279; the sequence is PQSTYQFKTPE. N-linked (GlcNAc...) asparagine glycans are attached at residues Asn-399, Asn-437, Asn-455, and Asn-536. A helical membrane pass occupies residues 616 to 636; sequence LIAILLCIVTLLVTVVLFAAL. At 637-790 the chain is on the cytoplasmic side; sequence RRQRKKEPLI…YGGVDSDKDS (154 aa). Phosphoserine occurs at positions 786 and 790.

It is found in the cell membrane. Functionally, cadherins are calcium-dependent cell adhesion proteins. They preferentially interact with themselves in a homophilic manner in connecting cells; cadherins may thus contribute to the sorting of heterogeneous cell types. This is Cadherin-6 (CDH6) from Bos taurus (Bovine).